The chain runs to 357 residues: DNA replication and repair protein RecF (357 aa).

Residue 30 to 37 participates in ATP binding; that stretch reads GANGSGKT.

It belongs to the RecF family.

It localises to the cytoplasm. Functionally, the RecF protein is involved in DNA metabolism; it is required for DNA replication and normal SOS inducibility. RecF binds preferentially to single-stranded, linear DNA. It also seems to bind ATP. The protein is DNA replication and repair protein RecF of Shigella boydii serotype 4 (strain Sb227).